Here is a 114-residue protein sequence, read N- to C-terminus: NADH-quinone oxidoreductase subunit K 2 (114 aa).

3 consecutive transmembrane segments (helical) span residues 1–21, 29–49, and 62–82; these read MIVP…LGVF, LIMI…AFIG, and FVLF…AIIV.

Belongs to the complex I subunit 4L family. In terms of assembly, NDH-1 is composed of 14 different subunits. Subunits NuoA, H, J, K, L, M, N constitute the membrane sector of the complex.

The protein resides in the cell inner membrane. It catalyses the reaction a quinone + NADH + 5 H(+)(in) = a quinol + NAD(+) + 4 H(+)(out). Its function is as follows. NDH-1 shuttles electrons from NADH, via FMN and iron-sulfur (Fe-S) centers, to quinones in the respiratory chain. The immediate electron acceptor for the enzyme in this species is believed to be ubiquinone. Couples the redox reaction to proton translocation (for every two electrons transferred, four hydrogen ions are translocated across the cytoplasmic membrane), and thus conserves the redox energy in a proton gradient. This chain is NADH-quinone oxidoreductase subunit K 2, found in Syntrophobacter fumaroxidans (strain DSM 10017 / MPOB).